The chain runs to 1064 residues: Isoleucine--tRNA ligase, cytoplasmic (1064 aa).

The short motif at 42 to 52 (PFATGRPHHGH) is the 'HIGH' region element. The short motif at 597-601 (KMSKR) is the 'KMSKS' region element. Lysine 600 lines the ATP pocket.

The protein belongs to the class-I aminoacyl-tRNA synthetase family.

It localises to the cytoplasm. The enzyme catalyses tRNA(Ile) + L-isoleucine + ATP = L-isoleucyl-tRNA(Ile) + AMP + diphosphate. This is Isoleucine--tRNA ligase, cytoplasmic (irs1) from Schizosaccharomyces pombe (strain 972 / ATCC 24843) (Fission yeast).